The primary structure comprises 714 residues: Cadherin-13 (714 aa).

The N-terminal stretch at 1 to 22 is a signal peptide; it reads MQPRTPLTLCVLLSQVLLVTSA. A propeptide spanning residues 23–138 is cleaved from the precursor; it reads DDLECTPGFQ…RTSPVPRQKR (116 aa). Cadherin domains lie at 143 to 245, 246 to 363, 364 to 477, 478 to 585, and 586 to 680; these read SPIL…RPIF, REGP…SPKF, TKKE…GPVF, YPDP…APVI, and YPTV…VQVC. Residues 156–183 form a disordered region; the sequence is PRDVGKVVDSDRPEGSKFRLTGKGVDQD. Basic and acidic residues predominate over residues 158–172; the sequence is DVGKVVDSDRPEGSK. 7 N-linked (GlcNAc...) asparagine glycosylation sites follow: asparagine 382, asparagine 489, asparagine 500, asparagine 530, asparagine 598, asparagine 638, and asparagine 671. Glycine 693 carries the GPI-anchor amidated glycine lipid modification. The propeptide at 694-714 is removed in mature form; the sequence is ALHLSLSLLLLFSLLSLLSGL.

By contrast to classical cadherins, homodimerization in trans is not mediated by cadherin EC1 domain strand-swapping, but instead through a homophilic adhesive interface which joins two elongated EC1-EC2 domains through a region near their Ca2+-binding sites to form a tetrahedral, X-like shape.

The protein resides in the cell membrane. The protein localises to the cytoplasm. Functionally, cadherins are calcium-dependent cell adhesion proteins. They preferentially interact with themselves in a homophilic manner in connecting cells; cadherins may thus contribute to the sorting of heterogeneous cell types. May act as a negative regulator of neural cell growth. This Mus musculus (Mouse) protein is Cadherin-13 (Cdh13).